Here is a 758-residue protein sequence, read N- to C-terminus: 5-methyltetrahydropteroyltriglutamate--homocysteine methyltransferase (758 aa).

5-methyltetrahydropteroyltri-L-glutamate-binding positions include 16-19 (RELK) and lysine 112. L-homocysteine contacts are provided by residues 433-435 (IGS) and glutamate 486. L-methionine contacts are provided by residues 433–435 (IGS) and glutamate 486. 5-methyltetrahydropteroyltri-L-glutamate-binding positions include 517–518 (RC) and tryptophan 563. Aspartate 601 lines the L-homocysteine pocket. Position 601 (aspartate 601) interacts with L-methionine. Glutamate 607 contributes to the 5-methyltetrahydropteroyltri-L-glutamate binding site. 3 residues coordinate Zn(2+): histidine 643, cysteine 645, and glutamate 667. The Proton donor role is filled by histidine 696. A Zn(2+)-binding site is contributed by cysteine 728.

This sequence belongs to the vitamin-B12 independent methionine synthase family. The cofactor is Zn(2+).

It carries out the reaction 5-methyltetrahydropteroyltri-L-glutamate + L-homocysteine = tetrahydropteroyltri-L-glutamate + L-methionine. It participates in amino-acid biosynthesis; L-methionine biosynthesis via de novo pathway; L-methionine from L-homocysteine (MetE route): step 1/1. Catalyzes the transfer of a methyl group from 5-methyltetrahydrofolate to homocysteine resulting in methionine formation. In Neisseria meningitidis serogroup A / serotype 4A (strain DSM 15465 / Z2491), this protein is 5-methyltetrahydropteroyltriglutamate--homocysteine methyltransferase.